The sequence spans 471 residues: Metal tolerance protein C1 (471 aa).

Topologically, residues 1 to 78 (MGIIRFQILN…PGEEGEKIFR (78 aa)) are cytoplasmic. The chain crosses the membrane as a helical span at residues 79–99 (LGLTADIGLSVAKALTGYLCG). The Vacuolar segment spans residues 100–101 (ST). Residues 102–122 (AIIADAAHSVSDVVLSGVALV) traverse the membrane as a helical segment. The Cytoplasmic portion of the chain corresponds to 123 to 144 (SYRAANVPKDKEHPYGHGKFET). Residues 145 to 165 (LGALGISAMLLATGSGIAWHA) traverse the membrane as a helical segment. Topologically, residues 166–192 (LDLLSIALSAAPEVIHSGHHHGIDMNH) are vacuolar. Residues 193-213 (PILALTVTIASISIKEGLYWI) traverse the membrane as a helical segment. The Cytoplasmic portion of the chain corresponds to 214–236 (TKRAGEKQGSGLMMANAWHHRSD). Residues 237–257 (AISSLVALVGVGGSILGVNFL) traverse the membrane as a helical segment. Residues 258 to 423 (DPLAGLVVST…RITPHLLHSK (166 aa)) are Vacuolar-facing. The chain crosses the membrane as a helical span at residues 424–444 (ILLQIVVAMPSTMSIQDVMIA). Topologically, residues 445–471 (AEHAEKEILKAAPNVARVSIQLSLNSE) are cytoplasmic.

It belongs to the cation diffusion facilitator (CDF) transporter (TC 2.A.4) family.

It is found in the vacuole membrane. Involved in sequestration of excess metal in the cytoplasm into vacuoles to maintain metal homeostasis. In Arabidopsis thaliana (Mouse-ear cress), this protein is Metal tolerance protein C1 (MTPC1).